A 132-amino-acid chain; its full sequence is Flagellar basal body rod protein FlgB (132 aa).

It belongs to the flagella basal body rod proteins family. The basal body constitutes a major portion of the flagellar organelle and consists of a number of rings mounted on a central rod. In Gram-negative bacteria, at least four rings, L, P, S and M are present, whereas Gram-positive bacteria lack the L and P rings. The rod consists of about 26 subunits of FlgG in the distal portion, and FlgB, FlgC and FlgF build up the proximal portion of the rod with about 6 subunits each. Rod assembly occurs by export via the flagellum-specific pathway of its constituent proteins and by their incorporation into the rod structure in the probable order of FlgB, FlgC, FlgF and FlgG. Another protein, FliE, also assembles onto the stable rod structure.

It is found in the bacterial flagellum basal body. In terms of biological role, structural component of flagellum, the bacterial motility apparatus. Part of the rod structure of flagellar basal body. The chain is Flagellar basal body rod protein FlgB from Aeromonas hydrophila.